A 378-amino-acid chain; its full sequence is Beta-1,3-galactosyltransferase pvg3 (378 aa).

At 1 to 8 (MFSNSKKK) the chain is on the cytoplasmic side. Residues 9–29 (IFLYVLIAGVATFSFAFLVLN) form a helical; Signal-anchor for type II membrane protein membrane-spanning segment. The Lumenal segment spans residues 30–378 (RLQAEEHSLA…ATIPLPSLDV (349 aa)). N-linked (GlcNAc...) asparagine glycosylation is found at asparagine 53, asparagine 97, asparagine 180, and asparagine 354.

Belongs to the glycosyltransferase 31 family.

The protein localises to the endoplasmic reticulum membrane. It localises to the golgi apparatus. Its subcellular location is the golgi stack membrane. The enzyme catalyses 3-O-(beta-D-galactosyl-(1-&gt;4)-beta-D-xylosyl)-L-seryl-[protein] + UDP-alpha-D-galactose = 3-O-(beta-D-galactosyl-(1-&gt;3)-beta-D-galactosyl-(1-&gt;4)-beta-D-xylosyl)-L-seryl-[protein] + UDP + H(+). In terms of biological role, involved in cell wall biogenesis. Has a role in the addition of Gal-beta1,3 moeities to galactomannans and their subsequent pyruvylation. Has a role in meiosis. The polypeptide is Beta-1,3-galactosyltransferase pvg3 (pvg3) (Schizosaccharomyces pombe (strain 972 / ATCC 24843) (Fission yeast)).